The primary structure comprises 288 residues: uncharacterized protein (288 aa).

Positions 1-27 are cleaved as a signal peptide; sequence MKFEFRTLVLISLAVVVVLSGCSQSPS. The tract at residues 144–167 is disordered; that stretch reads GESGEAGGAGEQLPASDQASGEEP.

This is an uncharacterized protein from Archaeoglobus fulgidus (strain ATCC 49558 / DSM 4304 / JCM 9628 / NBRC 100126 / VC-16).